The chain runs to 174 residues: Repair DNA polymerase X (174 aa).

The involved in ssDNA binding stretch occupies residues 42–51; that stretch reads REEKMLNDVD. Positions 49 and 51 each coordinate Mg(2+). A disulfide bond links Cys81 and Cys86. Asp100 contributes to the Mg(2+) binding site.

This sequence belongs to the DNA polymerase type-X family. Mg(2+) is required as a cofactor.

It is found in the virion. It catalyses the reaction DNA(n) + a 2'-deoxyribonucleoside 5'-triphosphate = DNA(n+1) + diphosphate. In terms of biological role, error-prone polymerase lacking a proofreading 3'-5' exonuclease which catalyzes the gap-filling reaction during the DNA repair process. Specifically binds intermediates in the single-nucleotide base-excision repair process. Also catalyzes DNA polymerization with low nucleotide-insertion fidelity. Probably acts as a strategic DNA mutase, which gives rise to a rapid emergence of variants. Generates mismatched G-G pairs, in that case, the polymerase first binds the deoxynucleotide followed by mismatch formation. Together with the viral DNA ligase, fills the single nucleotide gaps generated by the AP endonuclease. Binds DNA with high affinity via the helix alphaE. This chain is Repair DNA polymerase X, found in Ornithodoros (relapsing fever ticks).